A 197-amino-acid polypeptide reads, in one-letter code: Protein LURP-one-related 9 (197 aa).

This sequence belongs to the LOR family.

Its function is as follows. Might be related to the phospholipid scramblase and tubby-like superfamily of membrane tethered transcription factors. The chain is Protein LURP-one-related 9 from Arabidopsis thaliana (Mouse-ear cress).